Here is a 386-residue protein sequence, read N- to C-terminus: Lycopene beta-cyclase (386 aa).

NAD(+) is bound at residue 4–34 (DVLLAGAGLANGLIALALRAARPDLRVLLLD).

It belongs to the lycopene cyclase family. It depends on FAD as a cofactor.

The enzyme catalyses a carotenoid psi-end group = a carotenoid beta-end derivative. It catalyses the reaction all-trans-lycopene = gamma-carotene. The catalysed reaction is gamma-carotene = all-trans-beta-carotene. Its pathway is carotenoid biosynthesis; astaxanthin biosynthesis. In terms of biological role, catalyzes the double cyclization reaction which converts lycopene to beta-carotene. In Paracoccus sp. (strain N81106 / MBIC 01143) (Agrobacterium aurantiacum), this protein is Lycopene beta-cyclase.